The primary structure comprises 179 residues: Large ribosomal subunit protein uL5 (179 aa).

Belongs to the universal ribosomal protein uL5 family. Part of the 50S ribosomal subunit; part of the 5S rRNA/L5/L18/L25 subcomplex. Contacts the 5S rRNA and the P site tRNA. Forms a bridge to the 30S subunit in the 70S ribosome.

Its function is as follows. This is one of the proteins that bind and probably mediate the attachment of the 5S RNA into the large ribosomal subunit, where it forms part of the central protuberance. In the 70S ribosome it contacts protein S13 of the 30S subunit (bridge B1b), connecting the 2 subunits; this bridge is implicated in subunit movement. Contacts the P site tRNA; the 5S rRNA and some of its associated proteins might help stabilize positioning of ribosome-bound tRNAs. In Synechococcus sp. (strain RCC307), this protein is Large ribosomal subunit protein uL5.